Consider the following 303-residue polypeptide: Protoheme IX farnesyltransferase (303 aa).

The next 9 helical transmembrane spans lie at 17–37, 42–62, 91–111, 114–134, 142–162, 168–188, 208–228, 231–251, and 270–290; these read GVVM…TEPA, LATF…SAAI, AAIT…YFLV, LTAW…TLYL, IVIG…AVTG, AWLL…ALAI, IPFT…CTLL, LTGM…LVFL, and FGYS…DHYL.

The protein belongs to the UbiA prenyltransferase family. Protoheme IX farnesyltransferase subfamily.

It localises to the cell inner membrane. The enzyme catalyses heme b + (2E,6E)-farnesyl diphosphate + H2O = Fe(II)-heme o + diphosphate. Its pathway is porphyrin-containing compound metabolism; heme O biosynthesis; heme O from protoheme: step 1/1. Its function is as follows. Converts heme B (protoheme IX) to heme O by substitution of the vinyl group on carbon 2 of heme B porphyrin ring with a hydroxyethyl farnesyl side group. The chain is Protoheme IX farnesyltransferase from Alcanivorax borkumensis (strain ATCC 700651 / DSM 11573 / NCIMB 13689 / SK2).